Here is a 238-residue protein sequence, read N- to C-terminus: Major prion protein (238 aa).

The signal sequence occupies residues 1-15 (MLVLFVATWSDLGLC). The interval 16–215 (KKRPKPGGWN…ESQAYYQRGS (200 aa)) is interaction with GRB2, ERI3 and SYN1. A disordered region spans residues 18-93 (RPKPGGWNTG…WHKPSKPKTS (76 aa)). 4 consecutive repeat copies span residues 44-52 (PQGGGGWGQ), 53-60 (PHGGGWGQ), 61-68 (PHGGGWGQ), and 69-76 (PHGGGWGQ). A 4 X 8 AA tandem repeats of P-H-G-G-G-W-G-Q region spans residues 44-83 (PQGGGGWGQPHGGGWGQPHGGGWGQPHGGGWGQGGGTHNQ). Residues 45–80 (QGGGGWGQPHGGGWGQPHGGGWGQPHGGGWGQGGGT) show a composition bias toward gly residues. Cu(2+)-binding residues include glycine 47, glycine 48, histidine 54, glycine 55, glycine 56, histidine 62, glycine 63, glycine 64, histidine 70, glycine 71, and glycine 72. The span at 83-93 (QWHKPSKPKTS) shows a compositional bias: basic residues. A disulfide bond links cysteine 164 and cysteine 199. N-linked (GlcNAc...) asparagine glycans are attached at residues asparagine 166 and asparagine 182. The GPI-anchor amidated serine moiety is linked to residue serine 215. A propeptide spans 216–238 (SIVLFSSPPVILLISFLIFLIVG) (removed in mature form).

The protein belongs to the prion family. Monomer and homodimer. Has a tendency to aggregate into amyloid fibrils containing a cross-beta spine, formed by a steric zipper of superposed beta-strands. Soluble oligomers may represent an intermediate stage on the path to fibril formation. Copper binding may promote oligomerization. Interacts with GRB2, APP, ERI3/PRNPIP and SYN1. Mislocalized cytosolically exposed PrP interacts with MGRN1; this interaction alters MGRN1 subcellular location and causes lysosomal enlargement. Interacts with KIAA1191.

It is found in the cell membrane. It localises to the golgi apparatus. In terms of biological role, its primary physiological function is unclear. Has cytoprotective activity against internal or environmental stresses. May play a role in neuronal development and synaptic plasticity. May be required for neuronal myelin sheath maintenance. May play a role in iron uptake and iron homeostasis. Soluble oligomers are toxic to cultured neuroblastoma cells and induce apoptosis (in vitro). Association with GPC1 (via its heparan sulfate chains) targets PRNP to lipid rafts. Also provides Cu(2+) or Zn(2+) for the ascorbate-mediated GPC1 deaminase degradation of its heparan sulfate side chains. This Theropithecus gelada (Gelada baboon) protein is Major prion protein (PRNP).